Consider the following 30-residue polypeptide: MVELKFLIAFFLAFTAGILAIKLGQALYDC.

A helical membrane pass occupies residues 7–29; sequence LIAFFLAFTAGILAIKLGQALYD.

Belongs to the PsaM family.

The protein resides in the plastid. It is found in the chloroplast thylakoid membrane. This chain is Photosystem I reaction center subunit XII, found in Pinus thunbergii (Japanese black pine).